The chain runs to 457 residues: MKLHLYNTLTRTKEVFNPQDPANIKMYVCGPTVYDNPHIGNSRSVVVYDLLYRIIIKIFGKKAVKYVRNITDVDDKIIDRAELLGITINDLTDKVTREFHINMEYLGCMLPTIEPKATEHIDVMIEIIERLIAKDHAYIADNHVYFDVLSAPNYTELSNRNLEAMFEGVRIENSKTKKNPQDFVLWKPAKKNEPENINFTSPWGLGRPGWHIECSAMSYKYLGQNFDIHGGGADLIFPHHTNEIAQSRCAFPSSTYAKYWIHNGFLTVNGSKMSKSLGNFITVRDLMDKQIQGEVVRLFLLSSHYRRPLDYNDKAIDDAKKTLDYWYRAIEHINVQKVDLPSNFMRSLFDDMNTPLAIKIINDYAKCVFISKTEAERKFNASAIITCANFIGLMRKTQYEWFNRDVDEFYINELINKRLKAKKQKNWLLADKIRNQLLEKKIILEDKSNYITIWRKE.

C29 is a Zn(2+) binding site. The 'HIGH' region signature appears at 31-41; that stretch reads PTVYDNPHIGN. Residues C214, H239, and E243 each coordinate Zn(2+). Residues 272 to 276 carry the 'KMSKS' region motif; sequence KMSKS. K275 is a binding site for ATP.

Belongs to the class-I aminoacyl-tRNA synthetase family. Monomer. Zn(2+) is required as a cofactor.

It is found in the cytoplasm. The catalysed reaction is tRNA(Cys) + L-cysteine + ATP = L-cysteinyl-tRNA(Cys) + AMP + diphosphate. The sequence is that of Cysteine--tRNA ligase (cysS) from Rickettsia prowazekii (strain Madrid E).